We begin with the raw amino-acid sequence, 155 residues long: Isotocin-neurophysin IT 1 (155 aa).

An N-terminal signal peptide occupies residues 1–19 (MTGTAISVCLLFLLSVCSA). An intrachain disulfide couples C20 to C25. G28 carries the post-translational modification Glycine amide. Cystine bridges form between C41/C85, C44/C58, C52/C75, C59/C65, C92/C105, C99/C117, and C106/C111.

It belongs to the vasopressin/oxytocin family. In terms of processing, seven disulfide bonds are present in neurophysin.

Its function is as follows. Isotocin causes contraction of smooth muscles. The polypeptide is Isotocin-neurophysin IT 1 (Takifugu rubripes (Japanese pufferfish)).